The sequence spans 88 residues: Cytochrome c oxidase subunit 6B2 (88 aa).

The tract at residues 1-21 (MLGVQAQMPAPGQWTTPPFDP) is disordered. The region spanning 29–75 (TRNCYQNFLDYHRCVKTMDRRGKNTQACDYYFRVFHSLCPVSWVQRW) is the CHCH domain. The short motif at 32–42 (CYQNFLDYHRC) is the Cx9C motif element. 2 cysteine pairs are disulfide-bonded: Cys32–Cys67 and Cys42–Cys56. The Cx10C motif signature appears at 56 to 67 (CDYYFRVFHSLC).

It belongs to the cytochrome c oxidase subunit 6B family. As to quaternary structure, component of the cytochrome c oxidase (complex IV, CIV), a multisubunit enzyme composed of 14 subunits. The complex is composed of a catalytic core of 3 subunits MT-CO1, MT-CO2 and MT-CO3, encoded in the mitochondrial DNA, and 11 supernumerary subunits COX4I, COX5A, COX5B, COX6A, COX6B, COX6C, COX7A, COX7B, COX7C, COX8 and NDUFA4, which are encoded in the nuclear genome. The complex exists as a monomer or a dimer and forms supercomplexes (SCs) in the inner mitochondrial membrane with NADH-ubiquinone oxidoreductase (complex I, CI) and ubiquinol-cytochrome c oxidoreductase (cytochrome b-c1 complex, complex III, CIII), resulting in different assemblies (supercomplex SCI(1)III(2)IV(1) and megacomplex MCI(2)III(2)IV(2)). As to expression, testis specific.

The protein localises to the mitochondrion inner membrane. Its pathway is energy metabolism; oxidative phosphorylation. Component of the cytochrome c oxidase, the last enzyme in the mitochondrial electron transport chain which drives oxidative phosphorylation. The respiratory chain contains 3 multisubunit complexes succinate dehydrogenase (complex II, CII), ubiquinol-cytochrome c oxidoreductase (cytochrome b-c1 complex, complex III, CIII) and cytochrome c oxidase (complex IV, CIV), that cooperate to transfer electrons derived from NADH and succinate to molecular oxygen, creating an electrochemical gradient over the inner membrane that drives transmembrane transport and the ATP synthase. Cytochrome c oxidase is the component of the respiratory chain that catalyzes the reduction of oxygen to water. Electrons originating from reduced cytochrome c in the intermembrane space (IMS) are transferred via the dinuclear copper A center (CU(A)) of subunit 2 and heme A of subunit 1 to the active site in subunit 1, a binuclear center (BNC) formed by heme A3 and copper B (CU(B)). The BNC reduces molecular oxygen to 2 water molecules using 4 electrons from cytochrome c in the IMS and 4 protons from the mitochondrial matrix. In Rattus norvegicus (Rat), this protein is Cytochrome c oxidase subunit 6B2 (Cox6b2).